A 356-amino-acid chain; its full sequence is Phosphate acyltransferase (356 aa).

This sequence belongs to the PlsX family. In terms of assembly, homodimer. Probably interacts with PlsY.

Its subcellular location is the cytoplasm. It catalyses the reaction a fatty acyl-[ACP] + phosphate = an acyl phosphate + holo-[ACP]. The protein operates within lipid metabolism; phospholipid metabolism. Functionally, catalyzes the reversible formation of acyl-phosphate (acyl-PO(4)) from acyl-[acyl-carrier-protein] (acyl-ACP). This enzyme utilizes acyl-ACP as fatty acyl donor, but not acyl-CoA. The polypeptide is Phosphate acyltransferase (Shigella boydii serotype 4 (strain Sb227)).